The sequence spans 977 residues: Vacuolar protein sorting-associated protein 54 (977 aa).

Position 8 is a phosphoserine (S8). Residues 239 to 261 (HELQDYLKKTTQAVKMLRDKIAQ) are a coiled coil. The disordered stretch occupies residues 528–573 (ASAAVDTTSQRNTSPHSEPCSSDSVSEPECTTDSSSSKEQTSACAP). Residues 532–570 (VDTTSQRNTSPHSEPCSSDSVSEPECTTDSSSSKEQTSA) show a composition bias toward polar residues.

This sequence belongs to the VPS54 family. Component of the Golgi-associated retrograde protein (GARP) complex, also called VFT (VPS fifty-three) complex, composed of VPS51, VPS52, VPS53 and VPS54. EIPR1 interacts with GARP complex and mediates its recruitment to the trans-Golgi network. Interacts with VPS51 in an EIPR1-independent manner.

The protein resides in the golgi apparatus. It localises to the trans-Golgi network. It is found in the membrane. Its function is as follows. Acts as a component of the GARP complex that is involved in retrograde transport from early and late endosomes to the trans-Golgi network (TGN). The GARP complex is required for the maintenance of the cycling of mannose 6-phosphate receptors between the TGN and endosomes, this cycling is necessary for proper lysosomal sorting of acid hydrolases such as CTSD. Within the GARP complex, required to tether the complex to the TGN. Not involved in endocytic recycling. This chain is Vacuolar protein sorting-associated protein 54 (Vps54), found in Mus musculus (Mouse).